The primary structure comprises 237 residues: Methylthioribulose-1-phosphate dehydratase (237 aa).

Cysteine 97 lines the substrate pocket. Zn(2+)-binding residues include histidine 114 and histidine 116. The active-site Proton donor/acceptor is glutamate 143. Histidine 199 contributes to the Zn(2+) binding site.

This sequence belongs to the aldolase class II family. MtnB subfamily. Zn(2+) is required as a cofactor.

The protein resides in the cytoplasm. It carries out the reaction 5-(methylsulfanyl)-D-ribulose 1-phosphate = 5-methylsulfanyl-2,3-dioxopentyl phosphate + H2O. Its pathway is amino-acid biosynthesis; L-methionine biosynthesis via salvage pathway; L-methionine from S-methyl-5-thio-alpha-D-ribose 1-phosphate: step 2/6. Functionally, catalyzes the dehydration of methylthioribulose-1-phosphate (MTRu-1-P) into 2,3-diketo-5-methylthiopentyl-1-phosphate (DK-MTP-1-P). The protein is Methylthioribulose-1-phosphate dehydratase of Coccidioides posadasii (strain C735) (Valley fever fungus).